The following is a 124-amino-acid chain: Small ribosomal subunit protein uS12 (124 aa).

Asp-89 bears the 3-methylthioaspartic acid mark. The segment at Gln-105–Ser-124 is disordered. The segment covering Lys-108 to Gly-118 has biased composition (basic residues).

The protein belongs to the universal ribosomal protein uS12 family. Part of the 30S ribosomal subunit. Contacts proteins S8 and S17. May interact with IF1 in the 30S initiation complex.

With S4 and S5 plays an important role in translational accuracy. Its function is as follows. Interacts with and stabilizes bases of the 16S rRNA that are involved in tRNA selection in the A site and with the mRNA backbone. Located at the interface of the 30S and 50S subunits, it traverses the body of the 30S subunit contacting proteins on the other side and probably holding the rRNA structure together. The combined cluster of proteins S8, S12 and S17 appears to hold together the shoulder and platform of the 30S subunit. This is Small ribosomal subunit protein uS12 from Mycobacterium avium (strain 104).